Reading from the N-terminus, the 582-residue chain is 2-succinyl-5-enolpyruvyl-6-hydroxy-3-cyclohexene-1-carboxylate synthase (582 aa).

This sequence belongs to the TPP enzyme family. MenD subfamily. As to quaternary structure, homodimer. Mg(2+) is required as a cofactor. Requires Mn(2+) as cofactor. Thiamine diphosphate serves as cofactor.

The enzyme catalyses isochorismate + 2-oxoglutarate + H(+) = 5-enolpyruvoyl-6-hydroxy-2-succinyl-cyclohex-3-ene-1-carboxylate + CO2. Its pathway is quinol/quinone metabolism; 1,4-dihydroxy-2-naphthoate biosynthesis; 1,4-dihydroxy-2-naphthoate from chorismate: step 2/7. It participates in cofactor biosynthesis; phylloquinone biosynthesis. Its function is as follows. Catalyzes the thiamine diphosphate-dependent decarboxylation of 2-oxoglutarate and the subsequent addition of the resulting succinic semialdehyde-thiamine pyrophosphate anion to isochorismate to yield 2-succinyl-5-enolpyruvyl-6-hydroxy-3-cyclohexene-1-carboxylate (SEPHCHC). In Prochlorococcus marinus (strain MIT 9313), this protein is 2-succinyl-5-enolpyruvyl-6-hydroxy-3-cyclohexene-1-carboxylate synthase.